The chain runs to 323 residues: MSKYLRTSHPSPLICRPILTFSSLHILTAFLISGNSSYINWSVTIILLILGLYACHRFLNMKKLTRDAQEPLLPHIRPSTRNKIRKYIYGTIFILSIFLLYRSLNSPDTSKHGIGRNGDFIEYEPKAGPTIKEPVENIVKLDVYMEAQCPDTSRFFRQQLKKAWDILGRLNRIELNVIPFGKARCTEKGNDFECQCQHGPTECQINQLMNCVIDRFGFPHRYLPGVLCMQGKYSLDEAMKCVTENYPSEYERMRECASGTRGRRLLALSGQKTASLTPAIDFIPWIVINGSRNSDALYDLTQNVCEAMQPMPSACKDYLRSLQ.

A helical transmembrane segment spans residues 13–32; that stretch reads LICRPILTFSSLHILTAFLI. N-linked (GlcNAc...) asparagine glycosylation is present at N35. The next 2 helical transmembrane spans lie at 37 to 59 and 87 to 104; these read SYINWSVTIILLILGLYACHRFL and YIYGTIFILSIFLLYRSL. N-linked (GlcNAc...) asparagine glycosylation occurs at N289.

It belongs to the GILT family.

The protein resides in the membrane. The protein is GILT-like protein C02D5.2 of Caenorhabditis elegans.